Reading from the N-terminus, the 313-residue chain is Formimidoylglutamase (313 aa).

6 residues coordinate Mn(2+): histidine 130, aspartate 155, histidine 157, aspartate 159, aspartate 241, and aspartate 243.

It belongs to the arginase family. Mn(2+) is required as a cofactor.

The enzyme catalyses N-formimidoyl-L-glutamate + H2O = formamide + L-glutamate. The protein operates within amino-acid degradation; L-histidine degradation into L-glutamate; L-glutamate from N-formimidoyl-L-glutamate (hydrolase route): step 1/1. Functionally, catalyzes the conversion of N-formimidoyl-L-glutamate to L-glutamate and formamide. The polypeptide is Formimidoylglutamase (Salmonella enteritidis PT4 (strain P125109)).